Here is a 136-residue protein sequence, read N- to C-terminus: Class I hydrophobin A (136 aa).

The first 16 residues, 1 to 16 (MRFALAITTLIAAVTA), serve as a signal peptide directing secretion. Intrachain disulfides connect cysteine 39–cysteine 109, cysteine 47–cysteine 103, cysteine 48–cysteine 85, and cysteine 110–cysteine 128.

The protein belongs to the fungal hydrophobin family. Expressed in aerial conidia, in vitro blastospores, submerged conidia, and cells sporulating on chitin and insect cuticle, with hyd1 expression peaking in growing mycelia.

Its subcellular location is the secreted. The protein localises to the cell wall. It is found in the spore coat. The protein resides in the vacuole. It localises to the cytoplasmic vesicle. Its function is as follows. Aerial growth, conidiation, and dispersal of filamentous fungi in the environment rely upon a capability of their secreting small amphipathic proteins called hydrophobins (HPBs) with low sequence identity. Class I can self-assemble into an outermost layer of rodlet bundles on aerial cell surfaces, conferring cellular hydrophobicity that supports fungal growth, development and dispersal; whereas Class II form highly ordered films at water-air interfaces through intermolecular interactions but contribute nothing to the rodlet structure. Hyd1A contributes to certain cell wall-related features, such as hydrophobicity but is not involved in cell wall-related events during fungal proliferation in host hemocoel. Hyd1A and hyd1B coregulate the formation, morphology and orderly assembly of rodlet bundles required for conidial hydrophobicity and infectivity. Contributes to the spore coat rodlet layer. The polypeptide is Class I hydrophobin A (Beauveria bassiana (strain ARSEF 2860) (White muscardine disease fungus)).